Reading from the N-terminus, the 232-residue chain is Orotidine 5'-phosphate decarboxylase (232 aa).

Substrate-binding positions include aspartate 13, lysine 35, 62 to 71 (DLKFHDIPNT), threonine 122, arginine 182, glutamine 191, glycine 211, and arginine 212. Lysine 64 acts as the Proton donor in catalysis.

It belongs to the OMP decarboxylase family. Type 1 subfamily. Homodimer.

It catalyses the reaction orotidine 5'-phosphate + H(+) = UMP + CO2. The protein operates within pyrimidine metabolism; UMP biosynthesis via de novo pathway; UMP from orotate: step 2/2. Functionally, catalyzes the decarboxylation of orotidine 5'-monophosphate (OMP) to uridine 5'-monophosphate (UMP). This Pseudomonas fluorescens (strain Pf0-1) protein is Orotidine 5'-phosphate decarboxylase.